An 806-amino-acid chain; its full sequence is Ribonucleoside-diphosphate reductase large subunit (806 aa).

Residues methionine 1–aspartate 91 enclose the ATP-cone domain. Residues asparagine 5–arginine 6, glutamate 11–glutamine 17, threonine 52, and aspartate 56 each bind ATP. Serine 215 serves as a coordination point for GDP. A disulfide bridge connects residues cysteine 216 and cysteine 442. DTTP contacts are provided by residues aspartate 224–isoleucine 226, lysine 241, arginine 254, and arginine 261–glycine 262. Residue asparagine 425 participates in GDP binding. The Proton acceptor role is filled by asparagine 425. The active-site Cysteine radical intermediate is the cysteine 427. GDP contacts are provided by residues glutamate 429 and threonine 604–threonine 607. The active-site Proton acceptor is the glutamate 429.

Belongs to the ribonucleoside diphosphate reductase large chain family. As to quaternary structure, heterodimer of a large and a small subunit.

The catalysed reaction is a 2'-deoxyribonucleoside 5'-diphosphate + [thioredoxin]-disulfide + H2O = a ribonucleoside 5'-diphosphate + [thioredoxin]-dithiol. With respect to regulation, under complex allosteric control mediated by deoxynucleoside triphosphates and ATP binding to separate specificity and activation sites on the large subunit. The type of nucleotide bound at the specificity site determines substrate preference. It seems probable that ATP makes the enzyme reduce CDP and UDP, dGTP favors ADP reduction and dTTP favors GDP reduction. Stimulated by ATP and inhibited by dATP binding to the activity site. Provides the precursors necessary for DNA synthesis. Catalyzes the biosynthesis of deoxyribonucleotides from the corresponding ribonucleotides. This chain is Ribonucleoside-diphosphate reductase large subunit (RNR1), found in Plasmodium falciparum (isolate Dd2).